The sequence spans 165 residues: Ribosome maturation factor RimM (165 aa).

A PRC barrel domain is found at 90-161 (PDTYYVSDLK…KIIIKPVGEW (72 aa)).

It belongs to the RimM family. As to quaternary structure, binds ribosomal protein uS19.

The protein resides in the cytoplasm. An accessory protein needed during the final step in the assembly of 30S ribosomal subunit, possibly for assembly of the head region. Essential for efficient processing of 16S rRNA. May be needed both before and after RbfA during the maturation of 16S rRNA. It has affinity for free ribosomal 30S subunits but not for 70S ribosomes. In Clostridium beijerinckii (strain ATCC 51743 / NCIMB 8052) (Clostridium acetobutylicum), this protein is Ribosome maturation factor RimM.